The following is a 537-amino-acid chain: Chaperonin GroEL 1 (537 aa).

ATP is bound by residues 29–32, 86–90, glycine 413, 478–480, and aspartate 494; these read TLGP, DGTTT, and NAA.

The protein belongs to the chaperonin (HSP60) family. Forms a cylinder of 14 subunits composed of two heptameric rings stacked back-to-back. Interacts with the co-chaperonin GroES.

Its subcellular location is the cytoplasm. The enzyme catalyses ATP + H2O + a folded polypeptide = ADP + phosphate + an unfolded polypeptide.. In terms of biological role, together with its co-chaperonin GroES, plays an essential role in assisting protein folding. The GroEL-GroES system forms a nano-cage that allows encapsulation of the non-native substrate proteins and provides a physical environment optimized to promote and accelerate protein folding. The polypeptide is Chaperonin GroEL 1 (Corynebacterium efficiens (strain DSM 44549 / YS-314 / AJ 12310 / JCM 11189 / NBRC 100395)).